We begin with the raw amino-acid sequence, 722 residues long: Probable C-mannosyltransferase DPY19L4 (722 aa).

The interval 1 to 34 (MAKEEGTSVEPRQRKKQRTSGSQEAKAEKIRRTP) is disordered. At alanine 2 the chain carries N-acetylalanine. Over residues 25–34 (AKAEKIRRTP) the composition is skewed to basic and acidic residues. 12 helical membrane passes run 51-71 (IVIGCLAAVISGMMHVFYLSA), 160-177 (VYFYIGIVFGLQGMYVTA), 183-201 (WLMSGTWLAGMLTVAWFLI), 246-262 (FCYLLLSTSTYTFMMVW), 268-284 (VLFLQAVSLLLLDIFSV), 291-307 (YEVYKVYIFSLFLGYLL), 313-331 (ALLVSPLLSLVGAFMLVKC), 351-369 (FYLLCTLPVTLNLIVKMFV), 420-440 (LLPFYVLVLIICLLSMTQVFF), 465-485 (IIYHVIHTLLLGSLAMLMEGL), 487-507 (FIWTPYVCMLAAFGVCSPELW), and 521-541 (PMLLALILSMAVPTIIGLSLW).

The protein belongs to the dpy-19 family.

The protein resides in the membrane. Its function is as follows. Probable C-mannosyltransferase that mediates C-mannosylation of tryptophan residues on target proteins. In Mus musculus (Mouse), this protein is Probable C-mannosyltransferase DPY19L4 (Dpy19l4).